A 426-amino-acid polypeptide reads, in one-letter code: uncharacterized protein (426 aa).

To M.leprae L518_C2_147 and M.tuberculosis Rv1524.

This is an uncharacterized protein from Mycobacterium tuberculosis (strain CDC 1551 / Oshkosh).